Consider the following 515-residue polypeptide: Maturase K (515 aa).

It belongs to the intron maturase 2 family. MatK subfamily.

Its subcellular location is the plastid. The protein localises to the chloroplast. Its function is as follows. Usually encoded in the trnK tRNA gene intron. Probably assists in splicing its own and other chloroplast group II introns. The polypeptide is Maturase K (Pinus sibirica (Siberian pine)).